The chain runs to 264 residues: Short-chain dehydrogenase/reductase malC (264 aa).

The helical transmembrane segment at 13–35 (GKNVLIIGGTSGIGFAVAQLVIE) threads the bilayer. Residues T22, S23, I25, S45, N46, K49, D75, N88, R130, V202, and T204 each contribute to the NADP(+) site. N-linked (GlcNAc...) asparagine glycosylation occurs at N249.

Belongs to the short-chain dehydrogenases/reductases (SDR) family.

It is found in the membrane. The catalysed reaction is 1-hydroxy-3-{[2-(1,1-dimethylallyl)-indol-3-yl]methyl}-6H,7H,8H-5lambda(5)-pyrrolo[1,2-a]pyrazine + NADPH + H(+) = 1-hydroxy-3-{[2-(1,1-dimethylallyl)-indol-3-yl]methyl}-4H,6H,7H,8H-pyrrolo[1,2-a]pyrazine + NADP(+). It catalyses the reaction 1-hydroxy-3-{[2-(1,1-dimethylallyl)-indol-3-yl]methyl}-4H,6H,7H,8H-pyrrolo[1,2-a]pyrazine = (+)-premalbrancheamide. It participates in alkaloid biosynthesis. Functionally, short-chain dehydrogenase/reductase; part of the gene cluster that mediates the biosynthesis of malbrancheamide, a dichlorinated fungal indole alkaloid that belongs to a family of natural products containing a characteristic bicyclo[2.2.2]diazaoctane core. The first step of malbrancheamide biosynthesis involves coupling of L-proline and L-tryptophan by malG, a bimodular NRPS, to produce L-Pro-L-Trp aldehyde through reductive offloading. This compound undergoes spontaneous cyclization and dehydration to give a dienamine which is reverse prenylated at C-2 by malE. The other prenyltransferase present in the cluster, malB, displays modest activity, suggesting that may be a redundant gene in the pathway. Subsequently, a [4+2] Diels-Alder cyclo-addition catalyzed by the bifunctional enzyme malC forms the characteristic bicyclo[2.2.2]diazaoctane ring of premalbrancheamid. The first reaction catalyzed is a NADPH-dependent reduction reaction in which the nicotinamide cofactor is a stoichiometric reagent. Either NADH or NADPH is effective as a cofactor. NADP(+) is required for stereocontrolled formation of premalbrancheamide, however it does not appear to be required as a formal stoichiometric reagent because the second reaction performed by malC, the [4+2] cycloaddition, is a balanced chemical reaction without requirement for hydride transfer to balance the reaction. Finally, the flavin-dependent halogenase malA catalyzes the iterative dichlorination of the indole ring of premalbrancheamide to yield C-9 monochlorinated malbrancheamide B, C-8 monochlorinated isomalbrancheamide B, and dichlorinated malbrancheamide. MalA is also able to brominate premalbrancheamide at C-9 to yield malbrancheamide C, and, to a lesser extend, at C-8 to yield isomalbrancheamide C. Finally, malA can brominate C-9 monochlorinated malbrancheamide B at C-8 to yield malbrancheamide D, or C-8 monochlorinated isomalbrancheamide B at C-9 to produce isomalbrancheamide D. In Malbranchea aurantiaca, this protein is Short-chain dehydrogenase/reductase malC.